The primary structure comprises 325 residues: Metacaspase-9 (325 aa).

Active-site residues include His-95 and Cys-147. Cys-147 carries the post-translational modification S-nitrosocysteine. The N-linked (GlcNAc...) asparagine glycan is linked to Asn-177.

Belongs to the peptidase C14B family. In terms of processing, the two subunits are derived from the precursor sequence by an autocatalytic mechanism. S-nitrosylation at Cys-147 suppresses both autoprocessing and proteolytic activity of the full-length protein, but does not affect the activity of the mature processed form. Expressed in root tips, cauline leaves, flowers and siliques.

The protein resides in the secreted. Its subcellular location is the extracellular space. It localises to the apoplast. With respect to regulation, inhibited by serpin ZX and nitric oxide through cysteine nitrosylation. Its function is as follows. Cysteine protease that cleaves specifically after arginine or lysine residues. Does not cleave caspase-specific substrates. Required for proteolytic processing of GRI. This is Metacaspase-9 (AMC9) from Arabidopsis thaliana (Mouse-ear cress).